The sequence spans 475 residues: Exodeoxyribonuclease 7 large subunit (475 aa).

The disordered stretch occupies residues 452–475 (DHGLNRSSKSKRIKSKQDDQGTLF). The span at 466–475 (SKQDDQGTLF) shows a compositional bias: basic and acidic residues.

Belongs to the XseA family. In terms of assembly, heterooligomer composed of large and small subunits.

The protein localises to the cytoplasm. It carries out the reaction Exonucleolytic cleavage in either 5'- to 3'- or 3'- to 5'-direction to yield nucleoside 5'-phosphates.. In terms of biological role, bidirectionally degrades single-stranded DNA into large acid-insoluble oligonucleotides, which are then degraded further into small acid-soluble oligonucleotides. The sequence is that of Exodeoxyribonuclease 7 large subunit from Bartonella quintana (strain Toulouse) (Rochalimaea quintana).